The primary structure comprises 410 residues: Gamma-glutamyl phosphate reductase (410 aa).

This sequence belongs to the gamma-glutamyl phosphate reductase family.

It is found in the cytoplasm. It carries out the reaction L-glutamate 5-semialdehyde + phosphate + NADP(+) = L-glutamyl 5-phosphate + NADPH + H(+). It functions in the pathway amino-acid biosynthesis; L-proline biosynthesis; L-glutamate 5-semialdehyde from L-glutamate: step 2/2. Catalyzes the NADPH-dependent reduction of L-glutamate 5-phosphate into L-glutamate 5-semialdehyde and phosphate. The product spontaneously undergoes cyclization to form 1-pyrroline-5-carboxylate. This chain is Gamma-glutamyl phosphate reductase, found in Sulfurimonas denitrificans (strain ATCC 33889 / DSM 1251) (Thiomicrospira denitrificans (strain ATCC 33889 / DSM 1251)).